The sequence spans 168 residues: 2-C-methyl-D-erythritol 2,4-cyclodiphosphate synthase (168 aa).

Positions 15 and 17 each coordinate a divalent metal cation. 4-CDP-2-C-methyl-D-erythritol 2-phosphate-binding positions include 15-17 (DVH) and 45-46 (HS). Residue H53 participates in a divalent metal cation binding. 4-CDP-2-C-methyl-D-erythritol 2-phosphate-binding positions include 72–76 (FPNSD), F150, and R153.

This sequence belongs to the IspF family. Homotrimer. The cofactor is a divalent metal cation.

The enzyme catalyses 4-CDP-2-C-methyl-D-erythritol 2-phosphate = 2-C-methyl-D-erythritol 2,4-cyclic diphosphate + CMP. The protein operates within isoprenoid biosynthesis; isopentenyl diphosphate biosynthesis via DXP pathway; isopentenyl diphosphate from 1-deoxy-D-xylulose 5-phosphate: step 4/6. Its function is as follows. Involved in the biosynthesis of isopentenyl diphosphate (IPP) and dimethylallyl diphosphate (DMAPP), two major building blocks of isoprenoid compounds. Catalyzes the conversion of 4-diphosphocytidyl-2-C-methyl-D-erythritol 2-phosphate (CDP-ME2P) to 2-C-methyl-D-erythritol 2,4-cyclodiphosphate (ME-CPP) with a corresponding release of cytidine 5-monophosphate (CMP). The sequence is that of 2-C-methyl-D-erythritol 2,4-cyclodiphosphate synthase from Anaplasma phagocytophilum (strain HZ).